A 143-amino-acid polypeptide reads, in one-letter code: Root meristem growth factor 10 (143 aa).

The signal sequence occupies residues 1–27 (MDMLRSACFYFLLIVFVILSWSLLCDS). A propeptide spanning residues 28-130 (RHLGHMEKKL…SDQEHPGFNL (103 aa)) is cleaved from the precursor. Residue Asn-60 is glycosylated (N-linked (GlcNAc...) asparagine). Residues 74-83 (NHGDNGQING) show a composition bias toward polar residues. The interval 74–143 (NHGDNGQING…QPTTHPPHHN (70 aa)) is disordered. The Nuclear localization signal signature appears at 92-99 (VKRASDKK). The residue at position 132 (Tyr-132) is a Sulfotyrosine. Position 140 is a hydroxyproline (Pro-140).

The protein belongs to the RGF family. As to quaternary structure, binds to LRR receptor-like serine/threonine-protein kinases RGI1, RGI2 and RGI3 to trigger their dimerization with SERK proteins and subsequent signaling. In terms of processing, the tyrosine sulfation is critical for the function of the peptide. Expressed in root tips.

It localises to the secreted. Its subcellular location is the nucleus. Its function is as follows. Maintains the postembryonic root stem cell niche by regulating the expression levels and patterns of the transcription factor PLETHORA (PLT), mainly at the post-transcriptional level. Promotes root elongation. This chain is Root meristem growth factor 10, found in Arabidopsis thaliana (Mouse-ear cress).